A 544-amino-acid chain; its full sequence is Chaperonin GroEL 1 (544 aa).

ATP is bound by residues 29–32 (TLGP), 86–90 (DGTTT), Gly-413, 476–478 (NAA), and Asp-492. Residues 523-544 (EPVKAPAGGGDMDGMGGMGGMM) are disordered. Gly residues predominate over residues 529–544 (AGGGDMDGMGGMGGMM).

The protein belongs to the chaperonin (HSP60) family. As to quaternary structure, forms a cylinder of 14 subunits composed of two heptameric rings stacked back-to-back. Interacts with the co-chaperonin GroES.

It is found in the cytoplasm. The enzyme catalyses ATP + H2O + a folded polypeptide = ADP + phosphate + an unfolded polypeptide.. Its function is as follows. Together with its co-chaperonin GroES, plays an essential role in assisting protein folding. The GroEL-GroES system forms a nano-cage that allows encapsulation of the non-native substrate proteins and provides a physical environment optimized to promote and accelerate protein folding. This is Chaperonin GroEL 1 from Cutibacterium acnes (strain DSM 16379 / KPA171202) (Propionibacterium acnes).